Reading from the N-terminus, the 277-residue chain is Methyltransferase str3 (277 aa).

It belongs to the methyltransferase superfamily. LaeA methyltransferase family.

It functions in the pathway mycotoxin biosynthesis. Functionally, methyltransferase; part of the gene cluster that mediates the biosynthesis of strobilurin A, an antifungal polyketide that contains a key beta-methoxyacrylate toxophore that targets the complex III of the mitochondrial electron transport chain. Strobilurin biosynthesis begins with construction of benzoyl CoA by step-wise elimination of ammonia from phenylalanine by the phenylalanine ammonia-lyase str11, oxygenation by str8 and retro-Claisen reaction to form benzoic acid, which is activated to its CoA thiolester benzoyl CoA by the dedicated CoA ligase str10. Benzoyl CoA forms the starter unit for the highly reducing polyketide synthase stpks1 that produces the polyketide prestrobilutin A. The FAD-dependent oxygenase str9 then catalyzes the key oxidative rearrangement responsible for the creation of the beta-methoxyacrylate toxophore. Str9 performs epoxidation of the 2,3 olefin of prestrobilutin A, followed by Meinwald rearrangement to furnish the aldehyde intermediate. Rapid enolization of the aldehyde intermediate would give the beta-methoxyacrylate skeleton and methylations catalyzed by str2 and str3 complete the synthesis and lead to the production of strobilurin A. The short-chain dehydrogenase stl2 and the dehydrogenase str4 play a role in the shunt pathway leading to the production of bolineol. The cluster encodes no obvious halogenase gene that could be involved in production of strobilurin B, nor any obvious dimethylallyl-transferase that could be involved in the production of strobilurin G. It is possible that unknown proteins encoded in, or near, the cluster (such as str1 or stl1) may form new classes of halogenases or dimethylally-transferases, or that the responsible genes are located elsewhere on the genome. Similarly, proteins encoded by str5/str6 hydrolases appear to have no chemical role in the biosynthesis of strobilurin A. Finally, no obvious self-resistance gene is found within the cluster. The sequence is that of Methyltransferase str3 from Strobilurus tenacellus.